We begin with the raw amino-acid sequence, 307 residues long: Putative gluconeogenesis factor (307 aa).

Belongs to the gluconeogenesis factor family.

The protein localises to the cytoplasm. Required for morphogenesis under gluconeogenic growth conditions. This Yersinia pestis protein is Putative gluconeogenesis factor.